Here is a 92-residue protein sequence, read N- to C-terminus: DNA-directed RNA polymerase subunit Rpo11 (92 aa).

The protein belongs to the archaeal Rpo11/eukaryotic RPB11/RPC19 RNA polymerase subunit family. In terms of assembly, part of the 13-subunit RNA polymerase complex.

The protein resides in the cytoplasm. It catalyses the reaction RNA(n) + a ribonucleoside 5'-triphosphate = RNA(n+1) + diphosphate. In terms of biological role, DNA-dependent RNA polymerase (RNAP) catalyzes the transcription of DNA into RNA using the four ribonucleoside triphosphates as substrates. This chain is DNA-directed RNA polymerase subunit Rpo11, found in Saccharolobus solfataricus (strain ATCC 35092 / DSM 1617 / JCM 11322 / P2) (Sulfolobus solfataricus).